A 224-amino-acid polypeptide reads, in one-letter code: Heme response regulator HssR (224 aa).

Residues 3–116 (QCLVVDDDPR…ELIFRIRAVL (114 aa)) form the Response regulatory domain. At Asp52 the chain carries 4-aspartylphosphate. The segment at residues 124-222 (NSEMTIGNLT…VRGQGYKVEN (99 aa)) is a DNA-binding region (ompR/PhoB-type).

Post-translationally, phosphorylated by HssS.

The protein localises to the cytoplasm. Functionally, member of the two-component regulatory system HssS/HssR involved in intracellular heme homeostasis and tempering of staphylococcal virulence. Phosphorylated HssR binds to a direct repeat sequence within hrtAB promoter and activates the expression of hrtAB, an efflux pump, in response to extracellular heme, hemin, hemoglobin or blood. This Staphylococcus aureus (strain MRSA252) protein is Heme response regulator HssR (hssR).